A 260-amino-acid polypeptide reads, in one-letter code: Cystine transporter (260 aa).

Positions 1 to 67 (MVSLDDILGI…QLYCWKMTGD (67 aa)) constitute a PQ-loop 1 domain. Transmembrane regions (helical) follow at residues 7–28 (ILGI…ITNW), 40–62 (FVML…LYCW), 81–102 (FWYC…VAGA), 118–138 (WYLR…VQFM), and 151–175 (TLAY…PQVT). Positions 162-212 (KISMSLIKYIPQVTHNSTRKSMDCFPIQGVFLDVTGGIASLLQLIWQLSND) constitute a PQ-loop 2 domain. The N-linked (GlcNAc...) asparagine glycan is linked to Asn177. The next 2 helical transmembrane spans lie at 185-205 (CFPI…LLQL) and 227-247 (VGLS…WFVY).

It belongs to the cystinosin family.

It localises to the endosome membrane. The protein localises to the vacuole membrane. The catalysed reaction is L-cystine(out) + H(+)(out) = L-cystine(in) + H(+)(in). Its function is as follows. Cystine/H(+) symporter that mediates export of cystine, the oxidized dimer of cysteine, from vacuoles/endodomes. This Saccharomyces cerevisiae (strain ATCC 204508 / S288c) (Baker's yeast) protein is Cystine transporter (ERS1).